The chain runs to 242 residues: Anthranilate phosphoribosyltransferase (242 aa).

Residues glycine 79, 82-83 (GD), threonine 87, 89-92 (NVST), 107-115 (KHGNRAVSS), and serine 119 each bind 5-phospho-alpha-D-ribose 1-diphosphate. Glycine 79 is an anthranilate binding site. Serine 91 lines the Mg(2+) pocket. Asparagine 110 is a binding site for anthranilate. Anthranilate is bound at residue arginine 165. Residues aspartate 224 and glutamate 225 each contribute to the Mg(2+) site.

The protein belongs to the anthranilate phosphoribosyltransferase family. Homodimer. Mg(2+) serves as cofactor.

The enzyme catalyses N-(5-phospho-beta-D-ribosyl)anthranilate + diphosphate = 5-phospho-alpha-D-ribose 1-diphosphate + anthranilate. The protein operates within amino-acid biosynthesis; L-tryptophan biosynthesis; L-tryptophan from chorismate: step 2/5. In terms of biological role, catalyzes the transfer of the phosphoribosyl group of 5-phosphorylribose-1-pyrophosphate (PRPP) to anthranilate to yield N-(5'-phosphoribosyl)-anthranilate (PRA). This chain is Anthranilate phosphoribosyltransferase (trpD), found in Bacillus caldotenax.